The following is a 953-amino-acid chain: Isoleucine--tRNA ligase (953 aa).

The short motif at P57 to H67 is the 'HIGH' region element. E582 contributes to the L-isoleucyl-5'-AMP binding site. The 'KMSKS' region motif lies at K623 to S627. K626 serves as a coordination point for ATP. Positions 916, 919, 936, and 939 each coordinate Zn(2+).

The protein belongs to the class-I aminoacyl-tRNA synthetase family. IleS type 1 subfamily. As to quaternary structure, monomer. Requires Zn(2+) as cofactor.

Its subcellular location is the cytoplasm. It carries out the reaction tRNA(Ile) + L-isoleucine + ATP = L-isoleucyl-tRNA(Ile) + AMP + diphosphate. Catalyzes the attachment of isoleucine to tRNA(Ile). As IleRS can inadvertently accommodate and process structurally similar amino acids such as valine, to avoid such errors it has two additional distinct tRNA(Ile)-dependent editing activities. One activity is designated as 'pretransfer' editing and involves the hydrolysis of activated Val-AMP. The other activity is designated 'posttransfer' editing and involves deacylation of mischarged Val-tRNA(Ile). The sequence is that of Isoleucine--tRNA ligase from Bordetella pertussis (strain Tohama I / ATCC BAA-589 / NCTC 13251).